The primary structure comprises 341 residues: Biotin synthase (341 aa).

Residues 40–267 enclose the Radical SAM core domain; it reads AEIQVSTLLS…RSMVRLSAGR (228 aa). [4Fe-4S] cluster is bound by residues Cys55, Cys59, and Cys62. [2Fe-2S] cluster-binding residues include Cys99, Cys130, Cys190, and Arg262.

The protein belongs to the radical SAM superfamily. Biotin synthase family. Homodimer. The cofactor is [4Fe-4S] cluster. [2Fe-2S] cluster is required as a cofactor.

It catalyses the reaction (4R,5S)-dethiobiotin + (sulfur carrier)-SH + 2 reduced [2Fe-2S]-[ferredoxin] + 2 S-adenosyl-L-methionine = (sulfur carrier)-H + biotin + 2 5'-deoxyadenosine + 2 L-methionine + 2 oxidized [2Fe-2S]-[ferredoxin]. Its pathway is cofactor biosynthesis; biotin biosynthesis; biotin from 7,8-diaminononanoate: step 2/2. Its function is as follows. Catalyzes the conversion of dethiobiotin (DTB) to biotin by the insertion of a sulfur atom into dethiobiotin via a radical-based mechanism. This is Biotin synthase from Xylella fastidiosa (strain 9a5c).